The following is a 308-amino-acid chain: Barttin (308 aa).

Residues 1–5 are Cytoplasmic-facing; sequence MADEK. Residues 1 to 72 form a regulates channel membrane trafficking and anion conductance region; that stretch reads MADEKTFRIG…VPADSDFQGM (72 aa). The helical transmembrane segment at 6–26 threads the bilayer; that stretch reads TFRIGFIVLGLFLLSLGTFLM. The Extracellular segment spans residues 27-32; that stretch reads SHDRPQ. Residues 33-53 traverse the membrane as a helical segment; that stretch reads VYGTFYAMGSIMVIGGVLWSM. S-palmitoyl cysteine attachment occurs at residues cysteine 54 and cysteine 56. Over 54 to 308 the chain is Cytoplasmic; the sequence is CQCYPKITFV…ELGFEPDVQG (255 aa). 2 positions are modified to phosphoserine: serine 79 and serine 107. Disordered stretches follow at residues 127–149 and 162–308; these read PLLA…HSAQ and LDEK…DVQG. Residues 162–171 show a composition bias toward basic and acidic residues; the sequence is LDEKEGEKSR. A compositionally biased stretch (polar residues) spans 172–183; sequence SQSSPPACSQGS. Positions 274-283 are enriched in acidic residues; it reads EEPEQEEEDL. Serine 290 carries the post-translational modification Phosphoserine.

In terms of assembly, interacts with CLCNK channels. Forms heteromers with CLCNKA in the thin ascending limb of Henle and with CLCNKB in the thick ascending limb and more distal segments. Palmitoylation is necessary for activation of plasma membrane-inserted CLC-K/barttin channels. In terms of tissue distribution, expressed along the distal nephron.

It is found in the basolateral cell membrane. Its function is as follows. Regulatory subunit of anion-selective CLCNKA:BSND and CLCNKB:BSND heteromeric channels involved in basolateral chloride conductance along the nephron to achieve urine concentration and maintain systemic acid-base homeostasis, and in the stria vascularis of the inner ear to establish the endocochlear potential necessary for normal hearing. Most likely acts as a chaperone that allosterically regulates proper sorting of CLCNKA:BSND and CLCNKB:BSND channels at the basolateral plasma membrane domain and functional switch to ion conducting state. Mediates constitutive opening of channel common gates. In Rattus norvegicus (Rat), this protein is Barttin.